Reading from the N-terminus, the 434-residue chain is Glutamyl-tRNA reductase (434 aa).

Substrate contacts are provided by residues Thr-49–Arg-52, Ser-109, Glu-114–Gln-116, and Gln-120. Residue Cys-50 is the Nucleophile of the active site. Gly-189–Cys-194 lines the NADP(+) pocket.

This sequence belongs to the glutamyl-tRNA reductase family. In terms of assembly, homodimer.

It catalyses the reaction (S)-4-amino-5-oxopentanoate + tRNA(Glu) + NADP(+) = L-glutamyl-tRNA(Glu) + NADPH + H(+). The protein operates within porphyrin-containing compound metabolism; protoporphyrin-IX biosynthesis; 5-aminolevulinate from L-glutamyl-tRNA(Glu): step 1/2. Catalyzes the NADPH-dependent reduction of glutamyl-tRNA(Glu) to glutamate 1-semialdehyde (GSA). The protein is Glutamyl-tRNA reductase of Geotalea daltonii (strain DSM 22248 / JCM 15807 / FRC-32) (Geobacter daltonii).